The chain runs to 32 residues: MKKRFDWCLILIDIIEKLLNEADLSILIIVIC.

This is an uncharacterized protein from Schizosaccharomyces pombe (strain 972 / ATCC 24843) (Fission yeast).